The primary structure comprises 1363 residues: SKRRDMTVFSGLFLGGLPPELRSATLKLTLSSVKDREPFKGWITDVRVNYTQTSPVESQEVRLDDEQSRLCAREDVCLNGGVCSVLNDQAVCDCSQTGFRGKDCSEEDNYVEGLAHLMMGDQGKSKGKEEYIATFKGSEYFCYDLSQNPIQSSSDEITLSFKTLQRNGLMLHTGKSADYVNLALKNGAVSLVINLGSGAFEALVEPVNGKFNDNAWHDVKVTRNLRQHSGIGHAMVNKLHCSVTISVDGILTTTGYTQEDYTMLGSDDFFYVGGSPSTADLPGSPVSNNFMGCLKEVVYKNNDVRLELSRLAKQGDPKMKIHGVVAFKCENVATLDPITFETPESFISLPKWNAKKTGSISFDFRTTEPNGLILFSHGKPRHQKDAKHPQMVKVDFFAIEMLDGHLYLLLDMGSGTIKIKALQKKVNDGEWYHVDFQRDGRSGTISVNTLRTPYTAPGESEILDLDDDLYLGGLPENKAGLVFPTEVWTALLNYGYVGCIRDLFIDGQSKDIRQMAEIQSTAGVKPSCSRETAKPCLSNPCKNNGVCRDGWNRYVCDCSGTGYLGRSCEREATILSYDGSMFMKIQLPVVMHTEAEDVSLRFRSQRAYGILMATTSRESADTLRLELDAGRVKLTVNLDCIRINCNSSKGPETLFAGYNLNDNEWHTVRVVRRGKSLKLMVDDQQAMTGQMAGDHTRLEFHNIETGIITERRYLSSVPSNFIGHLQSLTFNGMAYIDLCKNGDIDYCELNARFGFRNIIADPVTFKTKASYVALATLQAYTSMHLFFQFKTTSLDGLILYNSGDGNDFIVVELVKGYLHYVFDLGNGANLIKGSSNKPLNDNQWHNVMISRDTNNLHTVKIDTKITTQSTAGARNLDLKSDLYIGGVAKEMYKSLPKLVHAKEGFQGCLASVDLNGRLPDLISDALFCNGQIERGCEGPSTTCQEDSCANQGVCLQQWDGFSCDCSMTSFSGPLCNDPGTTYIFSKGGGQITYTWPPNDRPSTRADRLAIGFSTVQKEAVLVRVDSSTGLGDYLELHIHQGKIGVKFNVGTDDIAIEEINAIINDGKYHVVRFTRSGGNATLQVDNWPVIERYPAGNNDNERLAIARQRIPYRLGRVVDEWLLDKGRQLTIFNSQATIKIGGKERGHPFQGQLSGLYYNGLKVLNMAAENDANIVIEGNVRLVGEVPSSMTTESTATAMQSEMSTSVMETTTTLATSTARRGKAPTKEPIGQTTDDILVASAECPSDDEDIDPCEPSSGGLANPTRAGGGREYPGSSEVIRESSSTTGMVVGIVAAAALCILILLYAMYKYRNRDEGSYHVDESRNYISNSAQSNGAVIKEKQPNSAKSSNKNKKNKDKEYYV.

Over 1-1287 the chain is Extracellular; that stretch reads SKRRDMTVFS…EVIRESSSTT (1287 aa). An N-linked (GlcNAc...) asparagine glycan is attached at asparagine 49. Positions 67–105 constitute an EGF-like 1 domain; that stretch reads QSRLCAREDVCLNGGVCSVLNDQAVCDCSQTGFRGKDCS. Intrachain disulfides connect cysteine 71–cysteine 83, cysteine 77–cysteine 92, and cysteine 94–cysteine 104. Laminin G-like domains lie at 132 to 329 and 336 to 528; these read IATF…AFKC and DPIT…KPSC. Residues aspartate 178, leucine 195, and methionine 263 each coordinate Ca(2+). Intrachain disulfides connect cysteine 293/cysteine 329, cysteine 499/cysteine 528, cysteine 536/cysteine 547, cysteine 541/cysteine 556, and cysteine 558/cysteine 568. In terms of domain architecture, EGF-like 2 spans 532–569; that stretch reads TAKPCLSNPCKNNGVCRDGWNRYVCDCSGTGYLGRSCE. Laminin G-like domains are found at residues 574–747 and 761–936; these read ILSY…IDYC and DPVT…ERGC. N-linked (GlcNAc...) asparagine glycosylation occurs at asparagine 646. Disulfide bonds link cysteine 908–cysteine 936, cysteine 943–cysteine 954, cysteine 948–cysteine 963, and cysteine 965–cysteine 975. In terms of domain architecture, EGF-like 3 spans 939–976; that stretch reads PSTTCQEDSCANQGVCLQQWDGFSCDCSMTSFSGPLCN. Residues 982-1180 enclose the Laminin G-like 5 domain; sequence YIFSKGGGQI…DANIVIEGNV (199 aa). Asparagine 1079 carries an N-linked (GlcNAc...) asparagine glycan. Residues 1244-1280 are disordered; it reads CPSDDEDIDPCEPSSGGLANPTRAGGGREYPGSSEVI. The helical transmembrane segment at 1288 to 1308 threads the bilayer; that stretch reads GMVVGIVAAAALCILILLYAM. At 1309 to 1363 the chain is on the cytoplasmic side; it reads YKYRNRDEGSYHVDESRNYISNSAQSNGAVIKEKQPNSAKSSNKNKKNKDKEYYV. The interval 1330 to 1363 is disordered; that stretch reads NSAQSNGAVIKEKQPNSAKSSNKNKKNKDKEYYV.

The protein belongs to the neurexin family. As to quaternary structure, the cytoplasmic C-terminal region binds to CASK. The laminin G-like domain 1 binds to NXPH1. Specific isoforms bind to alpha-dystroglycan and to alpha-latrotoxin. N- and O-glycosylated.

The protein resides in the membrane. Neuronal cell surface protein that may be involved in cell recognition and cell adhesion. May mediate intracellular signaling. The protein is Neurexin-1 (NRXN1) of Gallus gallus (Chicken).